Reading from the N-terminus, the 154-residue chain is Nuclear cap-binding protein subunit 2 (154 aa).

MRNA is bound by residues Y10, Y33, 102-106 (RVDWD), 113-117 (RQYGR), and 123-124 (QV). In terms of domain architecture, RRM spans 30-108 (CTLYVGNLSF…RLIRVDWDAG (79 aa)).

It belongs to the RRM NCBP2 family. Component of the nuclear cap-binding complex (CBC), a heterodimer composed of Cbp80 and Cbp20 that interacts with m7GpppG-capped RNA. Interacts with Ars2.

It is found in the nucleus. Functionally, component of the cap-binding complex (CBC), which binds co-transcriptionally to the 5' cap of pre-mRNAs and is involved in various processes such as pre-mRNA splicing and RNA-mediated gene silencing (RNAi). The CBC complex is involved in miRNA-mediated RNA interference via its interaction with Ars2 and is required for primary microRNAs (miRNAs) processing. Also involved in innate immunity via the short interfering RNAs (siRNAs) processing machinery by restricting the viral RNA production. In the CBC complex, Cbp20 recognizes and binds capped RNAs (m7GpppG-capped RNA) but requires Cbp80 to stabilize the movement of its N-terminal loop and lock the CBC into a high affinity cap-binding state with the cap structure. The sequence is that of Nuclear cap-binding protein subunit 2 (Cbp20) from Drosophila yakuba (Fruit fly).